A 335-amino-acid chain; its full sequence is 3-hydroxyisobutyrate dehydrogenase, mitochondrial (335 aa).

The transit peptide at 1 to 35 directs the protein to the mitochondrion; it reads MAASLGFRGAASGLRYWSGRRRPVGSLAAVCSRSM. Position 39 to 68 (39 to 68) interacts with NAD(+); it reads TPVGFIGLGNMGNPMAKNLIKHGYPLILYD. K59 and K75 each carry N6-acetyllysine; alternate. 2 positions are modified to N6-succinyllysine; alternate: K59 and K75. K94 is modified (N6-succinyllysine). NAD(+) is bound by residues 102–103 and N107; that span reads LP. Position 120 is an N6-acetyllysine (K120). Position 133 (T133) interacts with NAD(+). Residue K140 is modified to N6-succinyllysine. Position 144 is an N6-acetyllysine (K144). At K148 the chain carries N6-acetyllysine; alternate. N6-succinyllysine; alternate is present on K148. K208 is an active-site residue. Residues K237 and K241 each carry the N6-acetyllysine; alternate modification. Residues K237 and K241 each carry the N6-succinyllysine; alternate modification. K283 lines the NAD(+) pocket. Residue K296 is modified to N6-succinyllysine. An N6-acetyllysine; alternate modification is found at K320. Position 320 is an N6-succinyllysine; alternate (K320).

Belongs to the HIBADH-related family. 3-hydroxyisobutyrate dehydrogenase subfamily. Homodimer. Higher level in kidney, liver, and heart than in muscle.

It localises to the mitochondrion. The enzyme catalyses 3-hydroxy-2-methylpropanoate + NAD(+) = 2-methyl-3-oxopropanoate + NADH + H(+). Its pathway is amino-acid degradation; L-valine degradation. The protein is 3-hydroxyisobutyrate dehydrogenase, mitochondrial (Hibadh) of Rattus norvegicus (Rat).